The primary structure comprises 144 residues: Ribosomal RNA large subunit methyltransferase H (144 aa).

S-adenosyl-L-methionine-binding positions include L68, G96, and 112–117 (FSKLTF).

The protein belongs to the RNA methyltransferase RlmH family. Homodimer.

It localises to the cytoplasm. It catalyses the reaction pseudouridine(1915) in 23S rRNA + S-adenosyl-L-methionine = N(3)-methylpseudouridine(1915) in 23S rRNA + S-adenosyl-L-homocysteine + H(+). In terms of biological role, specifically methylates the pseudouridine at position 1915 (m3Psi1915) in 23S rRNA. The chain is Ribosomal RNA large subunit methyltransferase H from Mycoplasmopsis synoviae (strain 53) (Mycoplasma synoviae).